The primary structure comprises 551 residues: Cation/acetate symporter ActP (551 aa).

14 helical membrane passes run 5 to 25 (HWSALSLFVLPALAQAEALTG), 34 to 54 (IQAIVMFLLFVGGTLYITYWA), 77 to 97 (GLAIAGDYMSAASFLGISALV), 104 to 124 (GLIYSIGFLIGWPIILFLIAE), 150 to 170 (LSACGSLVVVALYLIAQMVGA), 184 to 204 (VAVVLVGILMVLYVLFGGMLA), 207 to 227 (WVQIIKAVMLLSGATFMAIMV), 263 to 283 (ISALSLGLALMFGTAGLPHIL), 304 to 324 (GFIGYFYILTFIIGFGAILLV), 356 to 376 (FFLGFISAVAFATILAVVAGL), 406 to 426 (VSKITVIILGIVAIGLGILFE), 430 to 450 (IAFMVGLAFSIAASCNFPIII), 469 to 489 (LGLSTAVILMILGPTIWVTIL), and 498 to 518 (YEYPALFSMIAAFVGTWFFSI).

It belongs to the sodium:solute symporter (SSF) (TC 2.A.21) family.

The protein resides in the cell inner membrane. Its function is as follows. Transports acetate. The sequence is that of Cation/acetate symporter ActP from Yersinia pseudotuberculosis serotype IB (strain PB1/+).